The primary structure comprises 386 residues: Paralemmin-1 (386 aa).

Residues 4-115 adopt a coiled-coil conformation; that stretch reads VEANTLQQER…TKENLAEAAA (112 aa). Disordered stretches follow at residues 21-40, 51-149, 240-290, and 321-378; these read RKRQ…DRRQ, ERWL…PMKA, EATA…TMIF, and DAES…AKKQ. 2 stretches are compositionally biased toward basic and acidic residues: residues 24–40 and 68–95; these read QTEI…DRRQ and AMKK…RELE. The span at 97–116 shows a compositional bias: low complexity; sequence LENSSSVTSTKENLAEAAAP. 3 stretches are compositionally biased toward basic and acidic residues: residues 259–282, 322–334, and 365–377; these read PRRE…EPSR, AESK…KDHA, and EAKE…DAKK. 2 S-palmitoyl cysteine lipidation sites follow: Cys380 and Cys382. A Cysteine methyl ester modification is found at Cys383. A lipid anchor (S-farnesyl cysteine) is attached at Cys383. Residues 384-386 constitute a propeptide, removed in mature form; that stretch reads TVM.

The protein belongs to the paralemmin family. In terms of assembly, interacts with dopamine receptor DRD3. Phosphorylated. In terms of tissue distribution, expressed in the lens (at protein level). Highly expressed in forebrain and cerebellum with lower expression in adrenal gland and heart. Expression weak or undetectable in other tissues.

The protein localises to the cell membrane. The protein resides in the cell projection. Its subcellular location is the filopodium membrane. It is found in the axon. It localises to the dendrite. The protein localises to the dendritic spine. The protein resides in the basolateral cell membrane. Its subcellular location is the apicolateral cell membrane. Involved in plasma membrane dynamics and cell process formation. Isoform 1 and isoform 2 are necessary for axonal and dendritic filopodia induction, for dendritic spine maturation and synapse formation in a palmitoylation-dependent manner. The protein is Paralemmin-1 (PALM) of Gallus gallus (Chicken).